The chain runs to 109 residues: B melanoma antigen 2 (109 aa).

The N-terminal stretch at 1–17 (MAAGVVFLALSAQLLQA) is a signal peptide.

Belongs to the BAGE family. As to expression, not expressed in normal tissues except in testis. Expressed in 22% of melanomas, in bladder and lung carcinomas.

The protein resides in the secreted. In terms of biological role, unknown. Candidate gene encoding tumor antigens. The chain is B melanoma antigen 2 (BAGE2) from Homo sapiens (Human).